We begin with the raw amino-acid sequence, 1296 residues long: Capping protein, Arp2/3 and myosin-I linker protein 2 (1296 aa).

LRR repeat units lie at residues 63–87 (DCTF…TFEL), 88–110 (ESLP…AQHV), 248–271 (ELVL…LAGH), 273–296 (NSGL…ALGR), 305–328 (DSTL…DSGG), 363–386 (CSSL…AAPA), 395–415 (TRML…ALRA), 426–448 (IHDL…VIQD), 453–477 (AGAL…VLAI), 480–506 (SRSL…VLHR), 515–538 (DCPL…LIRA), 542–565 (NPKL…MLAK), 570–594 (NTRL…VAQA), 598–621 (NHSL…RPEL), and 836–859 (TMAP…GLEE). A tropomodulin-like region spans residues 507-601 (IAQLMQDDDC…AQALEQNHSL (95 aa)). Residues 975 to 1002 (ATPVPRTLRKKLGTLFAFKKPRSTRGPR) form a necessary for localization at the cell membrane region. The tract at residues 988-1296 (TLFAFKKPRS…TDQRGGGPNP (309 aa)) is disordered. Position 1008 is a phosphoserine (Ser-1008). 2 stretches are compositionally biased toward basic and acidic residues: residues 1079-1091 (RPDK…RGDT) and 1118-1134 (ESKR…KAGS). Ser-1134 bears the Phosphoserine mark. Thr-1145 bears the Phosphothreonine mark. A compositionally biased stretch (polar residues) spans 1176-1185 (TWKTLGQQLN). Arg-1191 is subject to Omega-N-methylarginine. Composition is skewed to pro residues over residues 1199 to 1209 (PGPPSPCPSPS) and 1267 to 1285 (PLPP…PPSP). Phosphoserine occurs at positions 1203 and 1281.

This sequence belongs to the CARMIL family. As to quaternary structure, forms homodimers. Interacts (via C-terminus) with heterodimeric capping protein (CP); the interaction inhibits CP activity and hence promotes actin polymerization at the barbed end of actin filaments.

Its subcellular location is the cytoplasm. It localises to the cytoskeleton. It is found in the cell membrane. The protein localises to the cell projection. The protein resides in the lamellipodium. Its subcellular location is the ruffle. In terms of biological role, cell membrane-cytoskeleton-associated protein that plays a role in the regulation of actin polymerization at the barbed end of actin filaments. Prevents F-actin heterodimeric capping protein (CP) activity at the leading edges of migrating cells, and hence generates uncapped barbed ends and enhances actin polymerization. Plays a role in cell protrusion formations; involved in cell polarity, lamellipodial assembly, membrane ruffling and macropinosome formations. Involved as well in cell migration and invadopodia formation during wound healing. Required for CD28-mediated stimulation of NF-kappa-B signaling, involved in naive T cells activation, maturation into T memory cells, and differentiation into T helper cells. Required for CD28-mediated differentiation of T regulatory cells. This is Capping protein, Arp2/3 and myosin-I linker protein 2 from Mus musculus (Mouse).